A 142-amino-acid chain; its full sequence is Lipoprotein MlpI (142 aa).

A signal peptide spans 1 to 17; the sequence is MKIINILFCLFLLMLNS. C18 carries the N-palmitoyl cysteine lipid modification. The S-diacylglycerol cysteine moiety is linked to residue C18. The disordered stretch occupies residues 22 to 54; the sequence is DTNTSQTKSRQKRDLTQKEATQEKPKSKEDLLR. A compositionally biased stretch (basic and acidic residues) spans 33–54; that stretch reads KRDLTQKEATQEKPKSKEDLLR.

This sequence belongs to the Multicopy lipoprotein (Mlp) family.

The protein localises to the cell outer membrane. In terms of biological role, an outer membrane protein that may participate in pathogenesis. Some human Lyme disease patients have antibodies against this protein. The Mlp proteins probably undergo intragenic recombination, generating new alleles. The chain is Lipoprotein MlpI from Borreliella burgdorferi (strain ATCC 35210 / DSM 4680 / CIP 102532 / B31) (Borrelia burgdorferi).